The chain runs to 353 residues: tRNA N(3)-cytidine methyltransferase METTL2 (353 aa).

Residues 1 to 37 form a disordered region; that stretch reads MAAPVVAADSPVIENMPETAGGATENSAEAQKRPQFG. Trp93, Tyr97, Gly165, Asp190, Asp216, and Ile237 together coordinate S-adenosyl-L-methionine.

This sequence belongs to the methyltransferase superfamily. METL family. As to quaternary structure, monomer.

The protein resides in the cytoplasm. The catalysed reaction is cytidine(32) in tRNA(Thr) + S-adenosyl-L-methionine = N(3)-methylcytidine(32) in tRNA(Thr) + S-adenosyl-L-homocysteine + H(+). It catalyses the reaction cytidine(32) in tRNA(Arg)(CCU) + S-adenosyl-L-methionine = N(3)-methylcytidine(32) in tRNA(Arg)(CCU) + S-adenosyl-L-homocysteine + H(+). Functionally, S-adenosyl-L-methionine-dependent methyltransferase that mediates N(3)-methylcytidine modification of residue 32 of the tRNA anticodon loop of tRNA(Thr)(UGU) and tRNA(Arg)(CCU). N(3)-methylcytidine methylation by mettl2a requires the N6-threonylcarbamoylation of tRNA (t6A37) by the EKC/KEOPS complex as prerequisite. The sequence is that of tRNA N(3)-cytidine methyltransferase METTL2 (mettl2a) from Danio rerio (Zebrafish).